Reading from the N-terminus, the 127-residue chain is Aspartate 1-decarboxylase (127 aa).

The Schiff-base intermediate with substrate; via pyruvic acid role is filled by serine 25. Pyruvic acid (Ser) is present on serine 25. Residue threonine 57 coordinates substrate. Tyrosine 58 acts as the Proton donor in catalysis. 73–75 (GAA) is a substrate binding site.

This sequence belongs to the PanD family. In terms of assembly, heterooctamer of four alpha and four beta subunits. It depends on pyruvate as a cofactor. Is synthesized initially as an inactive proenzyme, which is activated by self-cleavage at a specific serine bond to produce a beta-subunit with a hydroxyl group at its C-terminus and an alpha-subunit with a pyruvoyl group at its N-terminus.

It localises to the cytoplasm. It carries out the reaction L-aspartate + H(+) = beta-alanine + CO2. The protein operates within cofactor biosynthesis; (R)-pantothenate biosynthesis; beta-alanine from L-aspartate: step 1/1. Catalyzes the pyruvoyl-dependent decarboxylation of aspartate to produce beta-alanine. The polypeptide is Aspartate 1-decarboxylase (Neisseria meningitidis serogroup B (strain ATCC BAA-335 / MC58)).